The chain runs to 485 residues: Dual specificity protein phosphatase CDC14B (485 aa).

The disordered stretch occupies residues 1-38; sequence MKRKSERRSAWATAPPCSRRSSSSSPGVKKSRSSTPQE. The Nucleolar localization signal motif lies at 1–54; it reads MKRKSERRSAWATAPPCSRRSSSSSPGVKKSRSSTPQELHRLEQQDDLYLDITD. The segment covering 15–28 has biased composition (low complexity); the sequence is PPCSRRSSSSSPGV. Residues 44–198 are a; that stretch reads QQDDLYLDIT…AMQYGFFNFN (155 aa). Positions 199–212 are linker; the sequence is SFNLDEYEHYEKAE. A b region spans residues 213–379; sequence NGDFNWIIPE…EGDYFRQKLR (167 aa). One can recognise a Tyrosine-protein phosphatase domain in the interval 215–374; it reads DFNWIIPERF…SSLWLEGDYF (160 aa). C314 functions as the Phosphocysteine intermediate in the catalytic mechanism. Positions 402–424 are disordered; sequence LNGLENQDNQEPEPYSDDDEVSG. Residues 409 to 422 show a composition bias toward acidic residues; it reads DNQEPEPYSDDDEV.

This sequence belongs to the protein-tyrosine phosphatase family. Non-receptor class CDC14 subfamily. As to quaternary structure, interacts with FZR1/CDH1.

The protein localises to the nucleus. It is found in the nucleolus. It localises to the nucleoplasm. It catalyses the reaction O-phospho-L-tyrosyl-[protein] + H2O = L-tyrosyl-[protein] + phosphate. The catalysed reaction is O-phospho-L-seryl-[protein] + H2O = L-seryl-[protein] + phosphate. It carries out the reaction O-phospho-L-threonyl-[protein] + H2O = L-threonyl-[protein] + phosphate. In terms of biological role, dual-specificity phosphatase involved in DNA damage response. Essential regulator of the G2 DNA damage checkpoint: following DNA damage, translocates to the nucleus and dephosphorylates FZR1/CDH1, a key activator of the anaphase promoting complex/cyclosome (APC/C). Dephosphorylates SIRT2 around early anaphase. Dephosphorylation of FZR1/CDH1 activates the APC/C, leading to the ubiquitination of PLK1, preventing entry into mitosis. Preferentially dephosphorylates proteins modified by proline-directed kinases. This Mus musculus (Mouse) protein is Dual specificity protein phosphatase CDC14B (Cdc14b).